The following is a 276-amino-acid chain: Sulfur carrier protein FdhD (276 aa).

Catalysis depends on Cys118, which acts as the Cysteine persulfide intermediate.

The protein belongs to the FdhD family.

It localises to the cytoplasm. Required for formate dehydrogenase (FDH) activity. Acts as a sulfur carrier protein that transfers sulfur from IscS to the molybdenum cofactor prior to its insertion into FDH. In Mycobacterium bovis (strain ATCC BAA-935 / AF2122/97), this protein is Sulfur carrier protein FdhD.